The primary structure comprises 21 residues: Cupiennin-6a (21 aa).

Ser-21 carries the serine amide modification.

In terms of tissue distribution, expressed by the venom gland.

The protein resides in the secreted. The protein is Cupiennin-6a of Cupiennius salei (American wandering spider).